We begin with the raw amino-acid sequence, 344 residues long: Angiopoietin-related protein 7 (344 aa).

The first 26 residues, 1 to 26, serve as a signal peptide directing secretion; the sequence is MLKKTLSAVAWLCIFLVAFVSHPVWP. Positions 37-116 form a coiled coil; that stretch reads ELTAATCCEE…IGIMQLQAAQ (80 aa). N-linked (GlcNAc...) asparagine glycosylation occurs at Asn-56. One can recognise a Fibrinogen C-terminal domain in the interval 120–341; that stretch reads QTSADAIYDC…RVEMKIRPED (222 aa). Cys-129 and Cys-160 are disulfide-bonded. Asn-251 and Asn-265 each carry an N-linked (GlcNAc...) asparagine glycan. Cysteines 283 and 296 form a disulfide.

Homotetramer; disulfide-linked.

The protein resides in the secreted. Its function is as follows. Has a role in the formation and organization of the extracellular matrix. In the eye, it functions as a mediator of dexamethasone-induced matrix deposition in the trabecular meshwork, the tissue responsible for the outflow of the ocular aqueous humor and for the maintenance of intraocular pressure. Is a negative regulator of angiogenesis in the cornea, and plays a major role in maintaining corneal avascularity and transparency. In Bos taurus (Bovine), this protein is Angiopoietin-related protein 7 (ANGPTL7).